The chain runs to 267 residues: UPF0162 protein HI_1558 (267 aa).

The protein belongs to the UPF0162 family.

The protein is UPF0162 protein HI_1558 of Haemophilus influenzae (strain ATCC 51907 / DSM 11121 / KW20 / Rd).